Here is a 2273-residue protein sequence, read N- to C-terminus: Acetyl-CoA carboxylase, mitochondrial (2273 aa).

The transit peptide at 1–104 (KGKTITHGQS…RGNIHKHTRL (104 aa)) directs the protein to the mitochondrion. Residues 134-635 (VISKILIANN…STGWLDDLIL (502 aa)) enclose the Biotin carboxylation domain. Residues 292 to 484 (KTNFVSVPDD…LPATQLQIAM (193 aa)) enclose the ATP-grasp domain. 332 to 337 (GGGGKG) provides a ligand contact to ATP. The active site involves R459. In terms of domain architecture, Biotinyl-binding spans 763-837 (LEAELNPTQV…EAGDVIAKLT (75 aa)). K804 carries the post-translational modification N6-biotinyllysine. Positions 1532-1867 (PYSVKDWLQP…KRDMSPPLLE (336 aa)) constitute a CoA carboxyltransferase N-terminal domain. Residues 1532–2187 (PYSVKDWLQP…EGQVIKRLQK (656 aa)) are carboxyltransferase. CoA is bound by residues R1776, K2080, and R2082. Positions 1871-2187 (RWDRDVDFKP…EGQVIKRLQK (317 aa)) constitute a CoA carboxyltransferase C-terminal domain.

Requires biotin as cofactor.

The protein resides in the mitochondrion. The catalysed reaction is hydrogencarbonate + acetyl-CoA + ATP = malonyl-CoA + ADP + phosphate + H(+). It carries out the reaction N(6)-biotinyl-L-lysyl-[protein] + hydrogencarbonate + ATP = N(6)-carboxybiotinyl-L-lysyl-[protein] + ADP + phosphate + H(+). It participates in lipid metabolism; malonyl-CoA biosynthesis; malonyl-CoA from acetyl-CoA: step 1/1. Catalyzes the rate-limiting reaction in the mitochondrial fatty acid synthesis (FAS) type II pathway. Responsible for the production of the mitochondrial malonyl-CoA, used for the biosynthesis of the cofactor lipoic acid. This protein carries three functions: biotin carboxyl carrier protein, biotin carboxylase, and carboxyltransferase. This chain is Acetyl-CoA carboxylase, mitochondrial (HFA1), found in Saccharomyces cerevisiae (strain RM11-1a) (Baker's yeast).